Reading from the N-terminus, the 332-residue chain is ATPase GET3 (332 aa).

32 to 39 contributes to the ATP binding site; that stretch reads KGGVGKTT. Asp61 is a catalytic residue. ATP contacts are provided by Glu235 and Asn262. Residues Cys273 and Cys276 each contribute to the Zn(2+) site.

The protein belongs to the arsA ATPase family. As to quaternary structure, homodimer.

Its subcellular location is the cytoplasm. It localises to the endoplasmic reticulum. Its function is as follows. ATPase required for the post-translational delivery of tail-anchored (TA) proteins to the endoplasmic reticulum. Recognizes and selectively binds the transmembrane domain of TA proteins in the cytosol. This complex then targets to the endoplasmic reticulum by membrane-bound receptors, where the tail-anchored protein is released for insertion. This process is regulated by ATP binding and hydrolysis. ATP binding drives the homodimer towards the closed dimer state, facilitating recognition of newly synthesized TA membrane proteins. ATP hydrolysis is required for insertion. Subsequently, the homodimer reverts towards the open dimer state, lowering its affinity for the membrane-bound receptor, and returning it to the cytosol to initiate a new round of targeting. The chain is ATPase GET3 from Mycosarcoma maydis (Corn smut fungus).